Consider the following 355-residue polypeptide: Tetraacyldisaccharide 4'-kinase (355 aa).

49–56 (SAGGTGKT) lines the ATP pocket.

This sequence belongs to the LpxK family.

The enzyme catalyses a lipid A disaccharide + ATP = a lipid IVA + ADP + H(+). It participates in glycolipid biosynthesis; lipid IV(A) biosynthesis; lipid IV(A) from (3R)-3-hydroxytetradecanoyl-[acyl-carrier-protein] and UDP-N-acetyl-alpha-D-glucosamine: step 6/6. Transfers the gamma-phosphate of ATP to the 4'-position of a tetraacyldisaccharide 1-phosphate intermediate (termed DS-1-P) to form tetraacyldisaccharide 1,4'-bis-phosphate (lipid IVA). This Chlorobium phaeobacteroides (strain DSM 266 / SMG 266 / 2430) protein is Tetraacyldisaccharide 4'-kinase.